The primary structure comprises 156 residues: 6,7-dimethyl-8-ribityllumazine synthase (156 aa).

5-amino-6-(D-ribitylamino)uracil contacts are provided by residues Phe-22, 57–59 (AVE), and 81–83 (CVI). Residue 86-87 (GT) coordinates (2S)-2-hydroxy-3-oxobutyl phosphate. The active-site Proton donor is His-89. Phe-114 serves as a coordination point for 5-amino-6-(D-ribitylamino)uracil. Arg-128 provides a ligand contact to (2S)-2-hydroxy-3-oxobutyl phosphate.

The protein belongs to the DMRL synthase family. In terms of assembly, forms an icosahedral capsid composed of 60 subunits, arranged as a dodecamer of pentamers.

The enzyme catalyses (2S)-2-hydroxy-3-oxobutyl phosphate + 5-amino-6-(D-ribitylamino)uracil = 6,7-dimethyl-8-(1-D-ribityl)lumazine + phosphate + 2 H2O + H(+). Its pathway is cofactor biosynthesis; riboflavin biosynthesis; riboflavin from 2-hydroxy-3-oxobutyl phosphate and 5-amino-6-(D-ribitylamino)uracil: step 1/2. Its function is as follows. Catalyzes the formation of 6,7-dimethyl-8-ribityllumazine by condensation of 5-amino-6-(D-ribitylamino)uracil with 3,4-dihydroxy-2-butanone 4-phosphate. This is the penultimate step in the biosynthesis of riboflavin. This Tolumonas auensis (strain DSM 9187 / NBRC 110442 / TA 4) protein is 6,7-dimethyl-8-ribityllumazine synthase.